Here is a 72-residue protein sequence, read N- to C-terminus: Translation initiation factor IF-1 (72 aa).

In terms of domain architecture, S1-like spans 1–72 (MSKQDVIEFD…TKGRITYRGK (72 aa)).

Belongs to the IF-1 family. In terms of assembly, component of the 30S ribosomal translation pre-initiation complex which assembles on the 30S ribosome in the order IF-2 and IF-3, IF-1 and N-formylmethionyl-tRNA(fMet); mRNA recruitment can occur at any time during PIC assembly.

The protein resides in the cytoplasm. Functionally, one of the essential components for the initiation of protein synthesis. Stabilizes the binding of IF-2 and IF-3 on the 30S subunit to which N-formylmethionyl-tRNA(fMet) subsequently binds. Helps modulate mRNA selection, yielding the 30S pre-initiation complex (PIC). Upon addition of the 50S ribosomal subunit IF-1, IF-2 and IF-3 are released leaving the mature 70S translation initiation complex. The protein is Translation initiation factor IF-1 of Hydrogenovibrio crunogenus (strain DSM 25203 / XCL-2) (Thiomicrospira crunogena).